Here is a 715-residue protein sequence, read N- to C-terminus: MARNTAINRYRNIGICAHVDAGKTTTTERILFYTGLSHKMGEVHDGAATTDWMVQEQERGITITSAAITTFWEGSRRQYDKYRVNVIDTPGHVDFTIEVERSLRVLDGAVVVFCGTSGVEPQSETVWRQANKYGVPRIVYVNKMDRQGANFLRVVGQIKNRLGHTPVPIQIAIGAEENFEGQVDLIKMKAIYWNDDDKGTTYREEEIPAELVDLANEWRSNMVEAAAEASEELMNKYLEEGDLSAEDIKAGLRARTLASEIVPAVCGSSFKNKGVPLVLDAVIDFLPAPTEIPAIKGIHPDLADKPKEQMEESDYDERHADDNEPFSALAFKIATDPFVGTLTFVRVYSGVLESGQSVINSVKGKKERVGRMVQMHANQRDEIKEVRAGDIAALIGMKDVTTGETLCDPDKPIILERMDFPEPVISVAVEPKTKADQEKMGIALGKLAQEDPSFRVKTDEETGQTIISGMGELHLDILVDRMKREFNVEANIGKPQVSYRETITKDSVEIEGKFVRQSGGRGQFGHCWIRFSAPDVDDKGNITEGLVFTNEVVGGVVPKEYIPAIQKGIEEQMKNGVVAGYPLIGLKATVFDGSYHDVDSNEMAFKIAASMATKQLAQKGGGKVLEPIMKVEVVTPEDYMGDVMGDLNRRRGLIQGMEDSVSGKVIRAEVPLGEMFGYATDVRSMSQGRASYSMEFSKYAEAPSNIVEALVKKQG.

Residues 8-290 (NRYRNIGICA…AVIDFLPAPT (283 aa)) enclose the tr-type G domain. GTP is bound by residues 17–24 (AHVDAGKT), 88–92 (DTPGH), and 142–145 (NKMD).

It belongs to the TRAFAC class translation factor GTPase superfamily. Classic translation factor GTPase family. EF-G/EF-2 subfamily.

The protein localises to the cytoplasm. Functionally, catalyzes the GTP-dependent ribosomal translocation step during translation elongation. During this step, the ribosome changes from the pre-translocational (PRE) to the post-translocational (POST) state as the newly formed A-site-bound peptidyl-tRNA and P-site-bound deacylated tRNA move to the P and E sites, respectively. Catalyzes the coordinated movement of the two tRNA molecules, the mRNA and conformational changes in the ribosome. This is Elongation factor G from Ectopseudomonas mendocina (strain ymp) (Pseudomonas mendocina).